A 1448-amino-acid chain; its full sequence is Protein clueless (1448 aa).

3 disordered regions span residues 1–96 (MALE…HAEK), 110–129 (NANVEKPQEGGAPDAEADGD), and 265–286 (RTRPDSVDCTPPEYVTPGVSDP). Low complexity-rich tracts occupy residues 9–26 (NSNATATGDATATATKAS) and 41–66 (NLNPNSNQQNSNQNLVNGNGTAADGP). Basic residues predominate over residues 68–77 (AKKKGKKNRN). Polar residues predominate over residues 78 to 88 (KSPTEPTTEAV). A Phosphoserine modification is found at Ser270. The region spanning 424–666 (RAEDAFSSKL…RTFPPDVNFL (243 aa)) is the Clu domain. Disordered regions lie at residues 726–773 (SEKS…SGEA), 958–1010 (AVSS…SASD), and 1414–1448 (GEAEDAVSKDIKEQPEAGKQLTNGDKAAATEATSS). Positions 748–769 (GAEKPDDKEKKNEEEEKKERST) are enriched in basic and acidic residues. Over residues 966–981 (KKRGNGGKHNKHKSSK) the composition is skewed to basic residues. Over residues 986 to 1007 (QQQQQTTGNQNGSSSGSSNSSS) the composition is skewed to low complexity. The segment covering 1419–1429 (AVSKDIKEQPE) has biased composition (basic and acidic residues).

This sequence belongs to the CLU family.

It localises to the cytoplasm. Functionally, mRNA-binding protein involved in proper cytoplasmic distribution of mitochondria. The chain is Protein clueless from Drosophila melanogaster (Fruit fly).